The primary structure comprises 181 residues: uncharacterized protein (181 aa).

A helical transmembrane segment spans residues 133–153; it reads MCVCVHVCACVYVCMCVLVCM.

It localises to the membrane. This is an uncharacterized protein from Homo sapiens (Human).